The sequence spans 257 residues: Beta-fibrinogenase mucrofibrase-5 (257 aa).

An N-terminal signal peptide occupies residues Met-1–Ala-18. Residues Gln-19–Leu-24 constitute a propeptide that is removed on maturation. The Peptidase S1 domain maps to Ile-25–Ala-248. 6 cysteine pairs are disulfide-bonded: Cys-31/Cys-162, Cys-49/Cys-65, Cys-97/Cys-255, Cys-141/Cys-209, Cys-173/Cys-188, and Cys-199/Cys-224. Residue His-64 is the Charge relay system of the active site. Asn-102 carries an N-linked (GlcNAc...) asparagine glycan. Catalysis depends on Asp-109, which acts as the Charge relay system. Ser-203 functions as the Charge relay system in the catalytic mechanism.

This sequence belongs to the peptidase S1 family. Snake venom subfamily. In terms of assembly, monomer. In terms of tissue distribution, expressed by the venom gland.

It localises to the secreted. Functionally, snake venom serine protease with strong beta-fibrinogenolytic activities, angiotensin I (AGT)-degrading activities and strong kallikrein-like activities in vitro, releasing bradykinin from kininogen (KNG1). Intravenous injection mildly lowers blood pressure in experimental rats, which may be explained by the action on angiotensin I and kininogen. Exhibits amidase activity against N-benzoyl-Pro-Phe-Arg-p-nitroanilide in vitro. The chain is Beta-fibrinogenase mucrofibrase-5 from Protobothrops mucrosquamatus (Taiwan habu).